Reading from the N-terminus, the 281-residue chain is MQNSLQVAQVIISALPYIQKFRNKIFVVKYGGSAQIDDTLKNDFVRDIALLQLVGCKVVVVHGGGKKINSYLDRLHIKSEFVDGLRVTDKEAMEIVEMVLSGNINKEITALLNKNGARAIGVSGKDANLLKARILNNGKYGFVGEIERVNTYVLNGLLENGLIPVVAPVATDDEANSYNINADLCASKIASALKAERVIFLTDTRGILDKDGNLISKLNEAHITALKEDGTINGGMIPKVDAALECVKNGVANAHILDGRLPHSLLLELFTDDGIGTMIKG.

Residues 64–65 (GG), Arg86, and Asn179 each bind substrate.

This sequence belongs to the acetylglutamate kinase family. ArgB subfamily.

It localises to the cytoplasm. It catalyses the reaction N-acetyl-L-glutamate + ATP = N-acetyl-L-glutamyl 5-phosphate + ADP. Its pathway is amino-acid biosynthesis; L-arginine biosynthesis; N(2)-acetyl-L-ornithine from L-glutamate: step 2/4. Functionally, catalyzes the ATP-dependent phosphorylation of N-acetyl-L-glutamate. The polypeptide is Acetylglutamate kinase (Campylobacter curvus (strain 525.92)).